A 389-amino-acid chain; its full sequence is Jasmonate O-methyltransferase (389 aa).

Tyr18 lines the S-adenosyl-L-homocysteine pocket. Gln25 is a binding site for jasmonate. S-adenosyl-L-homocysteine is bound by residues Cys60, Asn65, Asp97, Leu98, Ser142, and Phe143. Jasmonate contacts are provided by His163 and Trp164. The Mg(2+) site is built by Asn186, Asp272, Phe274, and Asn275.

Belongs to the methyltransferase superfamily. Type-7 methyltransferase family. Mg(2+) serves as cofactor. Expressed in rosettes, cauline leaves and developing flowers but not in young seedlings.

Its subcellular location is the cytoplasm. The protein localises to the nucleus. It carries out the reaction jasmonate + S-adenosyl-L-methionine = methyl (-)-jasmonate + S-adenosyl-L-homocysteine. The protein operates within lipid metabolism; oxylipin biosynthesis. In terms of biological role, catalyzes the methylation of jasmonate into methyljasmonate, a plant volatile that acts as an important cellular regulator mediating diverse developmental processes and defense responses. This Arabidopsis thaliana (Mouse-ear cress) protein is Jasmonate O-methyltransferase.